The primary structure comprises 296 residues: N-acetylmuramic acid 6-phosphate etherase (296 aa).

The 164-residue stretch at 54–217 folds into the SIS domain; sequence VISCFQKGGR…STASMVGIGK (164 aa). Glutamate 82 (proton donor) is an active-site residue. Glutamate 113 is an active-site residue.

This sequence belongs to the GCKR-like family. MurNAc-6-P etherase subfamily. Homodimer.

The catalysed reaction is N-acetyl-D-muramate 6-phosphate + H2O = N-acetyl-D-glucosamine 6-phosphate + (R)-lactate. Its pathway is amino-sugar metabolism; N-acetylmuramate degradation. In terms of biological role, specifically catalyzes the cleavage of the D-lactyl ether substituent of MurNAc 6-phosphate, producing GlcNAc 6-phosphate and D-lactate. The sequence is that of N-acetylmuramic acid 6-phosphate etherase from Listeria monocytogenes serotype 4b (strain CLIP80459).